A 339-amino-acid polypeptide reads, in one-letter code: MRQKLEEIKNSAINELKTTLSKDQLEAIRVKYLGKKGELTQILRGMGALSQEERPIVGKVANEVRSYIEETIKEAFSDIKNKEKSIRLENETIDITMPGKKQAVGKRHPLDLTLESMKDIFISMGFTIEEGPEVELDKYNFEALNIPKNHPARGEQDTFYINDNLVLRTQTSPIQIRTMENQKPPIKMIAPGKVYRSDSVDATHSPIFYQMEGLVVDKGITFSDLKGTLELFAKRMFGDKVKTKFRPHHFPFTEPSAEMDATCFVCNGEGCKVCKGSGWIELLGCGMVHPQVLRNCNIDPEVYSGFAFGFGVDRMVMMKYGIDDIRLLYESDMRFLNQF.

Glutamate 254 lines the Mg(2+) pocket.

This sequence belongs to the class-II aminoacyl-tRNA synthetase family. Phe-tRNA synthetase alpha subunit type 1 subfamily. Tetramer of two alpha and two beta subunits. Requires Mg(2+) as cofactor.

It localises to the cytoplasm. The catalysed reaction is tRNA(Phe) + L-phenylalanine + ATP = L-phenylalanyl-tRNA(Phe) + AMP + diphosphate + H(+). This chain is Phenylalanine--tRNA ligase alpha subunit, found in Clostridium botulinum (strain ATCC 19397 / Type A).